A 374-amino-acid chain; its full sequence is Heme A synthase (374 aa).

Transmembrane regions (helical) follow at residues 22–42 (VAVW…IGAI), 107–127 (LWGR…WVRG), 135–155 (PTLA…WFMV), 172–192 (LHLG…LGLL), 209–229 (AWAA…VAGI), 265–285 (AAVQ…VLSL), 306–326 (AAAT…VVWI), and 327–347 (PLAT…VWTL). His271 contacts heme. His332 contributes to the heme binding site.

It belongs to the COX15/CtaA family. Type 2 subfamily. As to quaternary structure, interacts with CtaB. It depends on heme b as a cofactor.

It is found in the cell membrane. It catalyses the reaction Fe(II)-heme o + 2 A + H2O = Fe(II)-heme a + 2 AH2. Its pathway is porphyrin-containing compound metabolism; heme A biosynthesis; heme A from heme O: step 1/1. Catalyzes the conversion of heme O to heme A by two successive hydroxylations of the methyl group at C8. The first hydroxylation forms heme I, the second hydroxylation results in an unstable dihydroxymethyl group, which spontaneously dehydrates, resulting in the formyl group of heme A. The polypeptide is Heme A synthase (Rhodospirillum centenum (strain ATCC 51521 / SW)).